The chain runs to 25 residues: Css54 (25 aa).

In terms of tissue distribution, expressed by the venom gland.

The protein localises to the secreted. Its subcellular location is the target cell membrane. Functionally, amphipathic peptide that shows antibacterial activity against E.coli (MIC=12.5 ug/ml) and S.aureus (MIC=12.5 ug/ml). Has hemolytic activity against human erythrocytes (25 uM provokes 83% of hemolysis). May act by disrupting the integrity of the bacterial cell membrane. Increases efficacy of antibiotics (ethambutol, pyrazinamide, isoniazid, rifampicin) when tested against S.aureus, probably by facilitating their incorporation into the bacteria. This is Css54 from Centruroides suffusus (Durango bark scorpion).